Here is a 317-residue protein sequence, read N- to C-terminus: o-succinylbenzoate synthase (317 aa).

Residues 71-73 (NAT) and K95 each bind 2-succinylbenzoate. K97 functions as the Proton donor in the catalytic mechanism. Mg(2+)-binding residues include D128, E154, and D177. 2-succinylbenzoate is bound at residue 128–130 (DVN). K201 contributes to the 2-succinylbenzoate binding site. Catalysis depends on K201, which acts as the Proton acceptor.

It belongs to the mandelate racemase/muconate lactonizing enzyme family. MenC type 1 subfamily. In terms of assembly, monomer. Requires a divalent metal cation as cofactor.

The enzyme catalyses (1R,6R)-6-hydroxy-2-succinyl-cyclohexa-2,4-diene-1-carboxylate = 2-succinylbenzoate + H2O. It participates in quinol/quinone metabolism; 1,4-dihydroxy-2-naphthoate biosynthesis; 1,4-dihydroxy-2-naphthoate from chorismate: step 4/7. The protein operates within quinol/quinone metabolism; menaquinone biosynthesis. Its function is as follows. Converts 2-succinyl-6-hydroxy-2,4-cyclohexadiene-1-carboxylate (SHCHC) to 2-succinylbenzoate (OSB). Does not show N-succinylamino acid racemase (NSAR) activity with N-succinyl-L-phenylglycine as substrate. In Thermobifida fusca (strain YX), this protein is o-succinylbenzoate synthase.